Here is a 426-residue protein sequence, read N- to C-terminus: Adenylosuccinate synthetase (426 aa).

GTP-binding positions include 12–18 (GDEGKGK) and 40–42 (GHT). Aspartate 13 acts as the Proton acceptor in catalysis. Mg(2+) contacts are provided by aspartate 13 and glycine 40. IMP-binding positions include 13–16 (DEGK), 38–41 (NAGH), threonine 128, arginine 142, glutamine 223, threonine 238, and arginine 302. The Proton donor role is filled by histidine 41. 298–304 (TTTGRAR) is a binding site for substrate. GTP contacts are provided by residues arginine 304, 330-332 (KLD), and 412-414 (SVG).

The protein belongs to the adenylosuccinate synthetase family. As to quaternary structure, homodimer. It depends on Mg(2+) as a cofactor.

Its subcellular location is the cytoplasm. The enzyme catalyses IMP + L-aspartate + GTP = N(6)-(1,2-dicarboxyethyl)-AMP + GDP + phosphate + 2 H(+). It participates in purine metabolism; AMP biosynthesis via de novo pathway; AMP from IMP: step 1/2. Its function is as follows. Plays an important role in the de novo pathway of purine nucleotide biosynthesis. Catalyzes the first committed step in the biosynthesis of AMP from IMP. This is Adenylosuccinate synthetase from Thermoanaerobacter pseudethanolicus (strain ATCC 33223 / 39E) (Clostridium thermohydrosulfuricum).